The chain runs to 502 residues: Calnexin homolog (502 aa).

The signal sequence occupies residues 1–19 (MKFSAYLWWLFLNLALVKG). At 20–481 (TSLLSNVTLA…IDRILEQPLK (462 aa)) the chain is on the lumenal side. Asn-25 and Asn-104 each carry an N-linked (GlcNAc...) asparagine glycan. Cys-125 and Cys-161 form a disulfide bridge. An alpha-D-glucoside-binding residues include Lys-131 and Asp-159. Residues 248-381 (IPDVSVAKPH…PEIENPLYYE (134 aa)) are p domain (Extended arm). 5 tandem repeats follow at residues 250–261 (DVSVAKPHDWDD), 267–278 (DPEAVKLSDRDE), 286–297 (HPDGTEPPEWNS), 305–316 (DPNAQKPSWWKE), and 320–330 (GEWIPPMIKNP). 4 X approximate repeats stretches follow at residues 250–316 (DVSV…WWKE) and 320–377 (GEWI…IENP). Asn-296 is a glycosylation site (N-linked (GlcNAc...) asparagine). Cys-332 and Cys-338 are joined by a disulfide. Repeat copies occupy residues 339–349 (GQQIPGLINNA), 353–363 (GPGELNEIINP), and 367–377 (GEWHPPEIENP). Glu-398 provides a ligand contact to an alpha-D-glucoside. N-linked (GlcNAc...) asparagine glycosylation is found at Asn-416 and Asn-425. A helical transmembrane segment spans residues 482–502 (FVLTAAVVLLTTSVLCCVVFT).

The protein belongs to the calreticulin family. In terms of assembly, interacts with MPD1.

It is found in the endoplasmic reticulum membrane. Functionally, interacts with newly synthesized monoglucosylated glycoproteins in the endoplasmic reticulum. It may act in assisting protein assembly and/or in the retention within the ER of unassembled protein subunits. It seems to play a major role in the quality control apparatus of the ER by the retention of incorrectly folded proteins. The sequence is that of Calnexin homolog (CNE1) from Saccharomyces cerevisiae (strain ATCC 204508 / S288c) (Baker's yeast).